Consider the following 527-residue polypeptide: Cytochrome P450 monooxyhenase eriA (527 aa).

Residues 17–37 traverse the membrane as a helical segment; the sequence is LGVVDLSLLGVGAVIAFAWLF. N-linked (GlcNAc...) asparagine glycosylation is found at Asn-77, Asn-274, and Asn-297. Residue Cys-453 coordinates heme.

It belongs to the cytochrome P450 family. Heme serves as cofactor.

The protein resides in the membrane. The enzyme catalyses cyathadiol + reduced [NADPH--hemoprotein reductase] + O2 = cyathatriol + oxidized [NADPH--hemoprotein reductase] + H2O + H(+). Its pathway is secondary metabolite biosynthesis. Cytochrome P450 monooxygenase; part of the gene cluster that mediates the biosynthesis of erinacines, cyathane-xylosides that show unique biological activities, including leishmanicidal activity, stimulating activity for nerve growth-factor synthesis, and agonistic activity toward the kappa opioid receptor. Within the pathway, eriA catalyzes C-11 hydroxylation in the presence of the short chain dehydrogenase/reductase (SDR) eriH, which leads to the production of cyathatriol. The first step of the erinacines biosynthesis pathway is catalyzed by the geranylgeranyl diphosphate (GGPP) synthase eriE via conversion of farnesyl pyrophosphate and isopentyl pyrophosphate into geranylgeranyl pyrophosphate (GGPP). GGPP is then substrate of the diterpene cyclase eriG for the production of cyatha-3,12-diene. The cytochrome P450 monooxygenase eriI then hydroxylates cyatha-3,12-diene at C-14 of the seven-membered ring to produce erinacol, which is further hydroxylated at C-15 by the cytochrome P450 monooxygenase eriC to yield cyathadiol. The cytochrome P450 monooxygenase eriA then catalyzes C-11 hydroxylation in the presence of the short chain dehydrogenase/reductase (SDR) eriH, which leads to the production of cyathatriol. The acetyltransferase eriL converts cyathatriol into 11-O-acetyl-cyathatriol. The SDR eriH catalyzes further oxidation of 11-O-acetyl-cyathatriol into 1-O-acetylcyathin A3. Finally, the glycosyl transferase eriJ tranfers xylose from UDP-xylose onto C-14 of 11-O-acetyl-cyathatriol to form eracine Q. EriJ is also able to convert 11-O-acetyl-cyathatriol to eracine Q2 by using UDP-D-glucose as cosubstrate, but at a lower rate. This chain is Cytochrome P450 monooxyhenase eriA, found in Hericium erinaceus (Lion's mane mushroom).